Consider the following 687-residue polypeptide: FAD-dependent oxidoreductase domain-containing protein 2 (687 aa).

The signal sequence occupies residues 1–22; the sequence is MSVIQLVFRLLCVLDLLLAVSA. Asparagine 29 and asparagine 305 each carry an N-linked (GlcNAc...) asparagine glycan.

This sequence belongs to the FOXRED2 family. The cofactor is FAD. N-glycosylated.

The protein localises to the endoplasmic reticulum lumen. Its function is as follows. Probable flavoprotein which may function in endoplasmic reticulum associated degradation (ERAD). May bind non-native proteins in the endoplasmic reticulum and target them to the ubiquitination machinery for subsequent degradation. This is FAD-dependent oxidoreductase domain-containing protein 2 (foxred2) from Danio rerio (Zebrafish).